The primary structure comprises 479 residues: Proline--tRNA ligase (479 aa).

It belongs to the class-II aminoacyl-tRNA synthetase family. ProS type 3 subfamily. Homodimer.

Its subcellular location is the cytoplasm. It catalyses the reaction tRNA(Pro) + L-proline + ATP = L-prolyl-tRNA(Pro) + AMP + diphosphate. Functionally, catalyzes the attachment of proline to tRNA(Pro) in a two-step reaction: proline is first activated by ATP to form Pro-AMP and then transferred to the acceptor end of tRNA(Pro). The chain is Proline--tRNA ligase from Agathobacter rectalis (strain ATCC 33656 / DSM 3377 / JCM 17463 / KCTC 5835 / VPI 0990) (Eubacterium rectale).